Here is a 117-residue protein sequence, read N- to C-terminus: NADH-ubiquinone oxidoreductase chain 3 (117 aa).

A run of 3 helical transmembrane segments spans residues 1 to 21 (MLML…VMML), 58 to 78 (FLIA…LPMI), and 86 to 106 (LMNW…GLYH).

The protein belongs to the complex I subunit 3 family.

The protein resides in the mitochondrion membrane. The catalysed reaction is a ubiquinone + NADH + 5 H(+)(in) = a ubiquinol + NAD(+) + 4 H(+)(out). Its function is as follows. Core subunit of the mitochondrial membrane respiratory chain NADH dehydrogenase (Complex I) that is believed to belong to the minimal assembly required for catalysis. Complex I functions in the transfer of electrons from NADH to the respiratory chain. The immediate electron acceptor for the enzyme is believed to be ubiquinone. The chain is NADH-ubiquinone oxidoreductase chain 3 (mt:ND3) from Anopheles gambiae (African malaria mosquito).